Reading from the N-terminus, the 164-residue chain is Lipoprotein signal peptidase (164 aa).

4 helical membrane-spanning segments follow: residues 8–28 (IVAA…LLFV), 39–59 (VTPF…GWFQ), 64–84 (VGAT…AIWM), and 91–111 (LATI…IDRF). Active-site residues include Asp118 and Asp140. Residues 131-151 (YSWYVFNLADVAIVAGVIALL) form a helical membrane-spanning segment.

The protein belongs to the peptidase A8 family.

It is found in the cell inner membrane. The enzyme catalyses Release of signal peptides from bacterial membrane prolipoproteins. Hydrolyzes -Xaa-Yaa-Zaa-|-(S,diacylglyceryl)Cys-, in which Xaa is hydrophobic (preferably Leu), and Yaa (Ala or Ser) and Zaa (Gly or Ala) have small, neutral side chains.. The protein operates within protein modification; lipoprotein biosynthesis (signal peptide cleavage). In terms of biological role, this protein specifically catalyzes the removal of signal peptides from prolipoproteins. This chain is Lipoprotein signal peptidase, found in Nitrobacter hamburgensis (strain DSM 10229 / NCIMB 13809 / X14).